A 184-amino-acid polypeptide reads, in one-letter code: Thymidine kinase (184 aa).

ATP-binding positions include 15 to 22 (GPMFSGKS) and 89 to 92 (DEIQ). E90 (proton acceptor) is an active-site residue. Residues C146, C149, C178, and C181 each contribute to the Zn(2+) site.

The protein belongs to the thymidine kinase family. Homotetramer.

It is found in the cytoplasm. The enzyme catalyses thymidine + ATP = dTMP + ADP + H(+). The protein is Thymidine kinase of Mesomycoplasma hyopneumoniae (strain 232) (Mycoplasma hyopneumoniae).